The primary structure comprises 274 residues: Probable ribosomal RNA small subunit methyltransferase A (274 aa).

Residues His22, Leu24, Gly50, Glu71, Asp99, and Asn114 each coordinate S-adenosyl-L-methionine.

It belongs to the class I-like SAM-binding methyltransferase superfamily. rRNA adenine N(6)-methyltransferase family. RsmA subfamily.

The protein resides in the cytoplasm. Specifically dimethylates two adjacent adenosines in the loop of a conserved hairpin near the 3'-end of 16S rRNA in the 30S particle. May play a critical role in biogenesis of 30S subunits. In Natronomonas pharaonis (strain ATCC 35678 / DSM 2160 / CIP 103997 / JCM 8858 / NBRC 14720 / NCIMB 2260 / Gabara) (Halobacterium pharaonis), this protein is Probable ribosomal RNA small subunit methyltransferase A.